A 192-amino-acid chain; its full sequence is Putative acetyltransferase SH0499 (192 aa).

Belongs to the transferase hexapeptide repeat family.

The polypeptide is Putative acetyltransferase SH0499 (Staphylococcus haemolyticus (strain JCSC1435)).